The chain runs to 75 residues: Metallothionein-like protein 1 (75 aa).

It belongs to the metallothionein superfamily. Type 15 family.

Metallothioneins have a high content of cysteine residues that bind various heavy metals. This is Metallothionein-like protein 1 from Cicer arietinum (Chickpea).